We begin with the raw amino-acid sequence, 398 residues long: MKVLVLNCGSSSLKYQLLDMEKETVLAKGLVERIGLEGSRLIIDLPGREKIKKEQPFVNHEVAINAVLEELVREEYGILRNLEEITAIGHRIVHGGEKFSGSVIINEEILKAVEECVNLAPLHNPPNILGIRACQKLLPNTPQVGVFDTAFHQTMPRKAYLYGVPYYWYEKYGIRRYGFHGTSHKYVAYKASEILGKPLNELKIITCHLGNGSSVAAVKEGKSIDTSMGFTPLEGLLMGTRSGNIDPAIVTFIQEKEGLSAAQVNDILNKKSGVLGISGYSDFRDIEERASAGDDKAKLALEMFCYQVAKYIGAYAAAMNGVDAIVFTAGVGENSDVVRKEVCKYLEFLGATLDEEKNKIRGKEAIISTPDSKVKIMVIPTNEELMIAKETLELVVNK.

Mg(2+) is bound at residue N7. Residue K14 participates in ATP binding. R91 lines the substrate pocket. D148 serves as the catalytic Proton donor/acceptor. Residues 208 to 212 (HLGNG), 282 to 284 (DFR), and 330 to 334 (GVGEN) each bind ATP. Residue E383 participates in Mg(2+) binding.

This sequence belongs to the acetokinase family. As to quaternary structure, homodimer. Mg(2+) is required as a cofactor. The cofactor is Mn(2+).

The protein localises to the cytoplasm. The catalysed reaction is acetate + ATP = acetyl phosphate + ADP. Its pathway is metabolic intermediate biosynthesis; acetyl-CoA biosynthesis; acetyl-CoA from acetate: step 1/2. Catalyzes the formation of acetyl phosphate from acetate and ATP. Can also catalyze the reverse reaction. This chain is Acetate kinase, found in Carboxydothermus hydrogenoformans (strain ATCC BAA-161 / DSM 6008 / Z-2901).